The sequence spans 247 residues: Cell division protein ZapD (247 aa).

Belongs to the ZapD family. In terms of assembly, interacts with FtsZ.

It is found in the cytoplasm. Cell division factor that enhances FtsZ-ring assembly. Directly interacts with FtsZ and promotes bundling of FtsZ protofilaments, with a reduction in FtsZ GTPase activity. The protein is Cell division protein ZapD of Salmonella dublin (strain CT_02021853).